Reading from the N-terminus, the 418-residue chain is LL-diaminopimelate aminotransferase (418 aa).

2 residues coordinate substrate: Y25 and G52. Residues Y78, 115 to 116, Y140, N190, Y221, and 248 to 250 contribute to the pyridoxal 5'-phosphate site; these read SK and SFS. Substrate contacts are provided by K116, Y140, and N190. K251 carries the post-translational modification N6-(pyridoxal phosphate)lysine. R259 provides a ligand contact to pyridoxal 5'-phosphate.

This sequence belongs to the class-I pyridoxal-phosphate-dependent aminotransferase family. Homodimer. The cofactor is pyridoxal 5'-phosphate.

It is found in the cytoplasm. The catalysed reaction is (2S,6S)-2,6-diaminopimelate + 2-oxoglutarate = (S)-2,3,4,5-tetrahydrodipicolinate + L-glutamate + H2O + H(+). Its pathway is amino-acid biosynthesis; L-lysine biosynthesis via DAP pathway; LL-2,6-diaminopimelate from (S)-tetrahydrodipicolinate (aminotransferase route): step 1/1. In terms of biological role, involved in the synthesis of meso-diaminopimelate (m-DAP or DL-DAP), required for both lysine and peptidoglycan biosynthesis. Catalyzes the direct conversion of tetrahydrodipicolinate to LL-diaminopimelate, a reaction that requires three enzymes in E.coli. The protein is LL-diaminopimelate aminotransferase (dapL) of Methanocaldococcus jannaschii (strain ATCC 43067 / DSM 2661 / JAL-1 / JCM 10045 / NBRC 100440) (Methanococcus jannaschii).